The following is a 396-amino-acid chain: Probable sugar efflux transporter (396 aa).

A run of 12 helical transmembrane segments spans residues 15–35 (VVTLAIAAFIFNTTEFVPVGL), 50–70 (VGIMLTIYAWVVAVMSLPFML), 81–101 (LICLFVLFIASHVLSFLAWNF), 103–123 (VLVISRIGIAFAHAIFWSITA), 136–156 (AQALSLIATGTALAMVLGLPI), 169–189 (TFFAIGMGALITLLCLIKLLP), 209–229 (PALMSLYVLTVVVVTAHYTAY), 246–266 (FATVLLLILGGAGIIGSLVFG), 275–295 (SLVSIAIALLVICLLLLLPAA), 301–321 (LAILSIFWGIAIMVIGLGMQV), 333–353 (VAMALFSGIFNIGIGAGALVG), and 364–384 (AIGYIGAIPACAALVWAVLIF).

This sequence belongs to the major facilitator superfamily. SotB (TC 2.A.1.2) family.

It localises to the cell inner membrane. Functionally, involved in the efflux of sugars. The physiological role may be the reduction of the intracellular concentration of toxic sugars or sugar metabolites. In Salmonella schwarzengrund (strain CVM19633), this protein is Probable sugar efflux transporter.